Here is a 520-residue protein sequence, read N- to C-terminus: 5'-nucleotidase domain-containing protein 2 (520 aa).

Asp73 serves as the catalytic Nucleophile. The Mg(2+) site is built by Asp73, Asp75, and Asp358. Catalysis depends on Asp75, which acts as the Proton donor.

This sequence belongs to the 5'(3')-deoxyribonucleotidase family. Interacts with tyrosine 3-monooxygenase TH; the interaction results in reduced phosphorylation and decreased catalytic activity of TH.

The protein resides in the cytoplasm. Its function is as follows. Promotes dephosphorylation of tyrosine 3-monooxygenase TH which decreases TH catalytic activity and leads to reduced synthesis of catecholamines including dopamine, noradrenaline and adrenaline. The exact mechanism of activity is unknown but may act as a phosphatase or promote the activity of phosphatases or may inhibit phosphorylation by acting as a barrier to interfere with protein kinase access. This chain is 5'-nucleotidase domain-containing protein 2 (NT5DC2), found in Homo sapiens (Human).